The chain runs to 496 residues: Probable glycine betaine transporter (496 aa).

Transmembrane regions (helical) follow at residues 11–31, 49–69, 89–109, 136–156, 188–208, 219–239, 260–280, 306–326, 341–361, 396–416, 441–461, and 468–488; these read TVLY…VFLP, FGWL…GIAI, FQWF…FWSV, VVFF…GLAL, AIDI…LGLG, IWGI…ITVI, VWLS…VFIL, WVGG…PFVG, FVFA…AIYG, LYAI…VGAA, FWGI…GTAA, and ASIA…YSIL.

The protein belongs to the BCCT transporter (TC 2.A.15) family.

Its subcellular location is the cell membrane. Its function is as follows. Probably acts in the uptake of glycine betaine. May function in the pathway that allows anaerobic methylotrophic growth of D.hafniense using glycine betaine. In Desulfitobacterium hafniense (strain Y51), this protein is Probable glycine betaine transporter.